A 497-amino-acid chain; its full sequence is Alkene monooxygenase system, oxygenase component subunit alpha (497 aa).

Positions 104, 134, 137, 197, 231, and 234 each coordinate Fe cation.

This sequence belongs to the TmoA/XamoA family. As to quaternary structure, the alkene monooxygenase multicomponent enzyme system is composed of an electron transfer component and a monooxygenase component interacting with the effector protein XamoD. The electron transfer component is composed of a ferredoxin reductase (XamoF) and a ferredoxin (XamoC), and the monooxygenase component is formed by a heterohexamer (dimer of heterotrimers) of two alpha subunits (XamoA), two beta subunits (XamoE) and two gamma subunits (XamoB). Fe(2+) is required as a cofactor.

The protein localises to the cytoplasm. It carries out the reaction propene + NADH + O2 + H(+) = 1,2-epoxypropane + NAD(+) + H2O. With respect to regulation, inhibited by propyne. Its function is as follows. Component of the alkene monooxygenase multicomponent enzyme system which catalyzes the O2- and NADH-dependent epoxidation of short chain (C2 to C6) alkenes to their corresponding epoxides. Also able to catalyze the oxidation of a number of chlorinated alkenes, including trichloroethylene, cis- and trans-1,2-dichloroethylene, vinyl chloride, 1-chloropropylene, 1,3-dichloropropylene and 2,3-dichloropropylene. This is Alkene monooxygenase system, oxygenase component subunit alpha from Xanthobacter autotrophicus (strain ATCC BAA-1158 / Py2).